Here is a 179-residue protein sequence, read N- to C-terminus: Large ribosomal subunit protein uL6 (179 aa).

This sequence belongs to the universal ribosomal protein uL6 family. Part of the 50S ribosomal subunit.

Functionally, this protein binds to the 23S rRNA, and is important in its secondary structure. It is located near the subunit interface in the base of the L7/L12 stalk, and near the tRNA binding site of the peptidyltransferase center. This is Large ribosomal subunit protein uL6 from Synechocystis sp. (strain ATCC 27184 / PCC 6803 / Kazusa).